Here is a 415-residue protein sequence, read N- to C-terminus: L-cysteine:1D-myo-inositol 2-amino-2-deoxy-alpha-D-glucopyranoside ligase 2 (415 aa).

A Zn(2+)-binding site is contributed by C44. L-cysteinyl-5'-AMP-binding positions include 44–47 (CGIT), T59, and 82–84 (NIT). The 'HIGH' region signature appears at 46-56 (ITPYDSTHLGH). Residues 188–193 (ERGGDP) carry the 'ERGGDP' region motif. W228 is an L-cysteinyl-5'-AMP binding site. C232 contacts Zn(2+). 250-252 (GSD) serves as a coordination point for L-cysteinyl-5'-AMP. H257 lines the Zn(2+) pocket. An L-cysteinyl-5'-AMP-binding site is contributed by I284. The 'KMSKS' region signature appears at 290-294 (KMSKS).

Belongs to the class-I aminoacyl-tRNA synthetase family. MshC subfamily. Monomer. Zn(2+) is required as a cofactor.

It catalyses the reaction 1D-myo-inositol 2-amino-2-deoxy-alpha-D-glucopyranoside + L-cysteine + ATP = 1D-myo-inositol 2-(L-cysteinylamino)-2-deoxy-alpha-D-glucopyranoside + AMP + diphosphate + H(+). Functionally, catalyzes the ATP-dependent condensation of GlcN-Ins and L-cysteine to form L-Cys-GlcN-Ins. This Corynebacterium jeikeium (strain K411) protein is L-cysteine:1D-myo-inositol 2-amino-2-deoxy-alpha-D-glucopyranoside ligase 2.